The chain runs to 81 residues: Kappa-theraphotoxin-Gr2c (81 aa).

An N-terminal signal peptide occupies residues 1–19 (MKAFFVILGLALLCAYSFA). The propeptide occupies 20–50 (LEEQDQLSLRNDLLTVMFAENSELTPETEER). 3 disulfides stabilise this stretch: Cys-52/Cys-66, Cys-59/Cys-71, and Cys-65/Cys-75.

This sequence belongs to the neurotoxin 30 (phrixotoxin) family. As to expression, expressed by the venom gland.

It is found in the secreted. Inhibits sodium channels Nav1.1/SCN1A (IC(50)=5.7 uM), Nav1.2/SCN2A (IC(50)=12 uM), Nav1.4/SCN4A (IC(50)=4 uM), Nav1.6/SCN8A (IC(50)=6.6 uM), Nav1.7/SCN9A (IC(50)=13.6-1030 nM), potassium channels Kv11.1/KCNH2 (IC(50)=4.7 uM), as well as high-voltage-gated calcium channels Cav1.2/CACNA1C (IC(50)= nM). Also blocks mechanosensitive ion channels (also named stretch-activated channels or SACs) and the hypotonic cell swelling induced calcium increase associated with the activation of such channels. It can thus be useful in treating cardiac ventricular disturbances. Also induces analgesia in mammals. This chain is Kappa-theraphotoxin-Gr2c, found in Grammostola rosea (Chilean rose tarantula).